We begin with the raw amino-acid sequence, 412 residues long: [Pyruvate dehydrogenase (acetyl-transferring)] kinase isozyme 4, mitochondrial (412 aa).

Positions 138 to 368 constitute a Histidine kinase domain; it reads IIEYKDSCTV…DAIIYLKALS (231 aa). ATP is bound by residues 254 to 261, D293, 312 to 313, and 329 to 334; these read ELFKNAMR, ST, and GFGYGL.

Belongs to the PDK/BCKDK protein kinase family. Homodimer. Interacts with the pyruvate dehydrogenase complex subunit DLAT, and is part of the multimeric pyruvate dehydrogenase complex that contains multiple copies of pyruvate dehydrogenase (E1), dihydrolipoamide acetyltransferase (DLAT, E2) and lipoamide dehydrogenase (DLD, E3). Detected in heart, white adipose tissue and muscle.

Its subcellular location is the mitochondrion matrix. It catalyses the reaction L-seryl-[pyruvate dehydrogenase E1 alpha subunit] + ATP = O-phospho-L-seryl-[pyruvate dehydrogenase E1 alpha subunit] + ADP + H(+). In terms of biological role, kinase that plays a key role in regulation of glucose and fatty acid metabolism and homeostasis via phosphorylation of the pyruvate dehydrogenase subunits PDHA1 and PDHA2. This inhibits pyruvate dehydrogenase activity, and thereby regulates metabolite flux through the tricarboxylic acid cycle, down-regulates aerobic respiration and inhibits the formation of acetyl-coenzyme A from pyruvate. Inhibition of pyruvate dehydrogenase decreases glucose utilization and increases fat metabolism in response to prolonged fasting and starvation. Plays an important role in maintaining normal blood glucose levels under starvation, and is involved in the insulin signaling cascade. Via its regulation of pyruvate dehydrogenase activity, plays an important role in maintaining normal blood pH and in preventing the accumulation of ketone bodies under starvation. In the fed state, mediates cellular responses to glucose levels and to a high-fat diet. Regulates both fatty acid oxidation and de novo fatty acid biosynthesis. Plays a role in the generation of reactive oxygen species. Protects detached epithelial cells against anoikis. Plays a role in cell proliferation via its role in regulating carbohydrate and fatty acid metabolism. This Rhinolophus ferrumequinum (Greater horseshoe bat) protein is [Pyruvate dehydrogenase (acetyl-transferring)] kinase isozyme 4, mitochondrial (PDK4).